The following is a 103-amino-acid chain: Large ribosomal subunit protein uL23 (103 aa).

Belongs to the universal ribosomal protein uL23 family. Part of the 50S ribosomal subunit. Contacts protein L29, and trigger factor when it is bound to the ribosome.

Its function is as follows. One of the early assembly proteins it binds 23S rRNA. One of the proteins that surrounds the polypeptide exit tunnel on the outside of the ribosome. Forms the main docking site for trigger factor binding to the ribosome. The sequence is that of Large ribosomal subunit protein uL23 from Zymomonas mobilis subsp. mobilis (strain ATCC 31821 / ZM4 / CP4).